The sequence spans 444 residues: Homogentisate 1,2-dioxygenase (444 aa).

Histidine 298 serves as the catalytic Proton acceptor. Residues histidine 341 and glutamate 347 each contribute to the Fe cation site. 2 residues coordinate homogentisate: tyrosine 356 and histidine 377. Histidine 377 is a Fe cation binding site.

This sequence belongs to the homogentisate dioxygenase family. Hexamer; dimer of trimers. Requires Fe cation as cofactor.

It catalyses the reaction homogentisate + O2 = 4-maleylacetoacetate + H(+). It functions in the pathway amino-acid degradation; L-phenylalanine degradation; acetoacetate and fumarate from L-phenylalanine: step 4/6. Functionally, involved in the catabolism of homogentisate (2,5-dihydroxyphenylacetate or 2,5-OH-PhAc), a central intermediate in the degradation of phenylalanine and tyrosine. Catalyzes the oxidative ring cleavage of the aromatic ring of homogentisate to yield maleylacetoacetate. In Burkholderia orbicola (strain MC0-3), this protein is Homogentisate 1,2-dioxygenase.